Consider the following 99-residue polypeptide: Small ribosomal subunit protein uS17 (99 aa).

Belongs to the universal ribosomal protein uS17 family. In terms of assembly, part of the 30S ribosomal subunit.

Functionally, one of the primary rRNA binding proteins, it binds specifically to the 5'-end of 16S ribosomal RNA. The chain is Small ribosomal subunit protein uS17 from Thermosipho melanesiensis (strain DSM 12029 / CIP 104789 / BI429).